The primary structure comprises 635 residues: DNA-directed RNA polymerase III subunit rpc3 (635 aa).

Disordered regions lie at residues 131 to 164 (PEQS…SDQQ), 246 to 295 (VPRG…GYDT), and 386 to 424 (SGSI…LSSG). Residues 272 to 292 (SVDEDDEQDEEENEWSDDEMG) show a composition bias toward acidic residues. The span at 398-407 (DNRRGKRPLE) shows a compositional bias: basic and acidic residues. A compositionally biased stretch (polar residues) spans 411 to 424 (NGTNHEGANGLSSG). A leucine-zipper region spans residues 562 to 583 (TYKAMSRCFQRLRFERNRLKEF).

This sequence belongs to the RNA polymerase beta chain family. In terms of assembly, component of the RNA polymerase III (Pol III) complex consisting of 17 subunits.

Its subcellular location is the nucleus. Its function is as follows. DNA-dependent RNA polymerase catalyzes the transcription of DNA into RNA using the four ribonucleoside triphosphates as substrates. Specific core component of RNA polymerase III which synthesizes small RNAs, such as 5S rRNA and tRNAs. The chain is DNA-directed RNA polymerase III subunit rpc3 (rpc82) from Aspergillus clavatus (strain ATCC 1007 / CBS 513.65 / DSM 816 / NCTC 3887 / NRRL 1 / QM 1276 / 107).